Consider the following 321-residue polypeptide: Type 3 secretion system translocon protein SctB (321 aa).

The helical transmembrane segment at 99-119 threads the bilayer; the sequence is AALIGGAISSVLGILGSFAAI.

This sequence belongs to the SctB/EspB family. The core secretion machinery of the T3SS is composed of approximately 20 different proteins, including cytoplasmic components, a base, an export apparatus and a needle. This subunit is involved in the formation of a pore, called the translocon, in host membrane.

It is found in the secreted. The protein localises to the cell surface. Its subcellular location is the host membrane. Component of the type III secretion system (T3SS), also called injectisome, which is used to inject bacterial effector proteins into eukaryotic host cells. EspD and EspB are inserted into the host membrane where they form a pore and allow the translocation of effector proteins into the cytosol of target cells. Necessary for intimate attachment to epithelial cells. In Escherichia coli O127:H6 (strain E2348/69 / EPEC), this protein is Type 3 secretion system translocon protein SctB.